A 147-amino-acid polypeptide reads, in one-letter code: Riboflavin kinase (147 aa).

15–20 (GLGEGR) is a binding site for CDP. Residues Thr-44 and Asn-46 each contribute to the Mg(2+) site. FMN is bound by residues Thr-97 and Glu-104. Residue 109–112 (TELR) participates in CDP binding.

This sequence belongs to the archaeal riboflavin kinase family. Mg(2+) is required as a cofactor.

It catalyses the reaction riboflavin + CTP = CDP + FMN + H(+). Its pathway is cofactor biosynthesis; FMN biosynthesis; FMN from riboflavin (CTP route): step 1/1. Its function is as follows. Catalyzes the CTP-dependent phosphorylation of riboflavin (vitamin B2) to form flavin mononucleotide (FMN). In Methanopyrus kandleri (strain AV19 / DSM 6324 / JCM 9639 / NBRC 100938), this protein is Riboflavin kinase.